The following is a 1791-amino-acid chain: Brefeldin A-inhibited guanine nucleotide-exchange protein 2 (1791 aa).

Residue methionine 1 is modified to N-acetylmethionine. The interval glutamine 2–threonine 224 is DCB; DCB:DCB domain and DCB:HUS domain interaction. Disordered regions lie at residues leucine 208–alanine 292 and alanine 311–aspartate 350. 3 positions are modified to phosphoserine: serine 214, serine 218, and serine 227. The segment covering serine 214 to alanine 225 has biased composition (polar residues). The span at leucine 233–threonine 243 shows a compositional bias: polar residues. Phosphothreonine is present on threonine 244. Basic and acidic residues predominate over residues threonine 244–arginine 257. Serine 277 carries the phosphoserine modification. Phosphoserine is present on residues serine 355 and serine 356. Residues alanine 515–asparagine 535 are HUS; DCB:HUS domain interaction. Position 621 is a phosphoserine (serine 621). Threonine 623 carries the phosphothreonine modification. Position 624 is a phosphoserine (serine 624). Residue threonine 633 is modified to Phosphothreonine. The SEC7 domain maps to phenylalanine 661–serine 792. 8 positions are modified to phosphoserine: serine 707, serine 1518, serine 1520, serine 1521, serine 1532, serine 1535, serine 1541, and serine 1788.

Homodimer. Interacts with ARFGEF1/BIG1; both proteins are probably part of the same or very similar macromolecular complexes. Interacts with PRKAR1A, PRKAR2A, PRKAR1B, PRKAR2B, PPP1CC, PDE3A, TNFRSF1A, MYCBP and EXOC7. Interacts with GABRB1, GABRB2 and GABRB3. Post-translationally, in vitro phosphorylated by PKA reducing its GEF activity and dephosphorylated by phosphatase PP1. In terms of tissue distribution, expressed in brain (at protein level).

It is found in the cytoplasm. Its subcellular location is the membrane. It localises to the golgi apparatus. The protein resides in the perinuclear region. The protein localises to the trans-Golgi network. It is found in the endosome. Its subcellular location is the cytoskeleton. It localises to the microtubule organizing center. The protein resides in the centrosome. The protein localises to the cell projection. It is found in the dendrite. Its subcellular location is the cytoplasmic vesicle. It localises to the synapse. Inhibited by brefeldin A. Functionally, promotes guanine-nucleotide exchange on ARF1 and ARF3 and to a lower extent on ARF5 and ARF6. Promotes the activation of ARF1/ARF5/ARF6 through replacement of GDP with GTP. Involved in the regulation of Golgi vesicular transport. Required for the integrity of the endosomal compartment. Involved in trafficking from the trans-Golgi network (TGN) to endosomes and is required for membrane association of the AP-1 complex and GGA1. Seems to be involved in recycling of the transferrin receptor from recycling endosomes to the plasma membrane. Probably is involved in the exit of GABA(A) receptors from the endoplasmic reticulum. Involved in constitutive release of tumor necrosis factor receptor 1 via exosome-like vesicles; the function seems to involve PKA and specifically PRKAR2B. Proposed to act as A kinase-anchoring protein (AKAP) and may mediate crosstalk between Arf and PKA pathways. The sequence is that of Brefeldin A-inhibited guanine nucleotide-exchange protein 2 (Arfgef2) from Rattus norvegicus (Rat).